Here is a 326-residue protein sequence, read N- to C-terminus: Probable cell division protein WhiA (326 aa).

A DNA-binding region (H-T-H motif) is located at residues 275–308; that stretch reads SLEELGQLAEPPMTKDAVAGRIRRLLAMADKRAR.

The protein belongs to the WhiA family.

Functionally, involved in cell division and chromosome segregation. In Saccharopolyspora erythraea (strain ATCC 11635 / DSM 40517 / JCM 4748 / NBRC 13426 / NCIMB 8594 / NRRL 2338), this protein is Probable cell division protein WhiA.